Here is a 117-residue protein sequence, read N- to C-terminus: Ribosome-binding factor A (117 aa).

The protein belongs to the RbfA family. As to quaternary structure, monomer. Binds 30S ribosomal subunits, but not 50S ribosomal subunits or 70S ribosomes.

The protein resides in the cytoplasm. One of several proteins that assist in the late maturation steps of the functional core of the 30S ribosomal subunit. Associates with free 30S ribosomal subunits (but not with 30S subunits that are part of 70S ribosomes or polysomes). Required for efficient processing of 16S rRNA. May interact with the 5'-terminal helix region of 16S rRNA. In Bacillus subtilis (strain 168), this protein is Ribosome-binding factor A.